The following is a 285-amino-acid chain: MAHQAHPFRSVLYIPGSKERALEKARGLAADAIIFDLEDAVAHDEKIHARRLLKTTLETADYGHRFRIVRVNGMDTEWGRADLEAFAEAKADAILIPKVSRAADLEAVAALVPDLPLWAMMETAQGMLNAAEIAAHPRLTGMVMGTNDLAKELGSRYRPDRLAMQAGLGLCLLAARAHGLTIVDGVYNAFRDEEGLRAECEQGRDMGFDGKTLIHPAQLEIANAVFSPSPAEIELANRQIAAFEEAERHGQGVAVVDGKIVENLHIVTARQTLAKAEAIAAFRAS.

Residues arginine 70 and glutamate 122 each coordinate substrate. Residues glutamate 122 and aspartate 148 each coordinate Mg(2+).

Belongs to the HpcH/HpaI aldolase family. As to quaternary structure, homodimer or homotrimer. The cofactor is Mg(2+).

It carries out the reaction (S)-malyl-CoA + H2O = (S)-malate + CoA + H(+). In terms of biological role, catalyzes the hydrolysis of (3S)-malyl-CoA to (3S)-malate and free CoA. Inactive towards beta-methylmalyl-CoA and other CoA esters. The chain is (3S)-malyl-CoA thioesterase from Cereibacter sphaeroides (strain KD131 / KCTC 12085) (Rhodobacter sphaeroides).